The sequence spans 818 residues: Myosin-A (818 aa).

Position 19 is a phosphoserine; by PKG (S19). The region spanning 97–771 (MSFGDIGLLN…GAKILTKIQR (675 aa)) is the Myosin motor domain. Residue 191–198 (GESGAGKT) coordinates ATP. The segment at 661–671 (PHFIRCIKPNE) is actin-binding. Residues 773-818 (KLVEWENCVSVIEAAILKHKYKQKVNKNIPSLLRVQAHIRKKMVAQ) are tail.

This sequence belongs to the TRAFAC class myosin-kinesin ATPase superfamily. Myosin family. As to quaternary structure, component of the glideosome complex composed of GAP50, GAP45, MTIP and MyoA; the complex is formed during the late schizont stage and in merozoites. MyoA, MTIP and GAP45 probably form an initial complex in the cytoplasm which is then recruited to the outer face of the inner membrane complex via the interaction with GAP50. Interacts with ACT1.

It localises to the cell membrane. Functionally, myosins are actin-based motor molecules with ATPase activity. Unconventional myosins serve in intracellular movements. Their highly divergent tails are presumed to bind to membranous compartments, which would be moved relative to actin filaments. This is Myosin-A from Plasmodium falciparum (isolate 3D7).